The primary structure comprises 413 residues: Lamin tail domain-containing protein 1 (413 aa).

Disordered stretches follow at residues 1–25 (MMKE…VQDG) and 102–128 (HKDS…SDVD). The segment covering 107 to 128 (LGKQSTSSMVPRRQPQSSSDVD) has biased composition (polar residues). The LTD domain occupies 169 to 287 (EVGQFTSSSL…EAIAWYTPIH (119 aa)). The segment at 356–413 (LPNKSPWCRNPNTSPHPYSSLIDSHDSDISESSLDTQLKPQPTKPKPDPGTKKKKAKS) is disordered. Residues 385–396 (SESSLDTQLKPQ) show a composition bias toward low complexity.

This sequence belongs to the intermediate filament family.

This chain is Lamin tail domain-containing protein 1 (Lmntd1), found in Mus musculus (Mouse).